The following is a 184-amino-acid chain: Ribosome-recycling factor (184 aa).

It belongs to the RRF family.

The protein localises to the cytoplasm. Its function is as follows. Responsible for the release of ribosomes from messenger RNA at the termination of protein biosynthesis. May increase the efficiency of translation by recycling ribosomes from one round of translation to another. The protein is Ribosome-recycling factor of Caldicellulosiruptor saccharolyticus (strain ATCC 43494 / DSM 8903 / Tp8T 6331).